The sequence spans 543 residues: Putative pectinesterase/pectinesterase inhibitor 22 (543 aa).

An N-terminal signal peptide occupies residues 1–19 (MGITTALLLVMLMSVHTSS). Residues 38–197 (AKACQFIDAH…TQLVSNVLDM (160 aa)) form a pectinesterase inhibitor 22 region. Residues Asn211 and Asn263 are each glycosylated (N-linked (GlcNAc...) asparagine). The interval 240-527 (NTVVAIDGKG…FTVGSFIDGR (288 aa)) is pectinesterase 22. Substrate-binding residues include Thr315 and Gln345. The active-site Proton donor; for pectinesterase activity is Asp368. Cys382 and Cys402 are oxidised to a cystine. The active-site Nucleophile; for pectinesterase activity is Asp389. Residues Arg448 and Trp450 each contribute to the substrate site.

The protein in the N-terminal section; belongs to the PMEI family. In the C-terminal section; belongs to the pectinesterase family.

The protein resides in the secreted. Its subcellular location is the cell wall. It catalyses the reaction [(1-&gt;4)-alpha-D-galacturonosyl methyl ester](n) + n H2O = [(1-&gt;4)-alpha-D-galacturonosyl](n) + n methanol + n H(+). The protein operates within glycan metabolism; pectin degradation; 2-dehydro-3-deoxy-D-gluconate from pectin: step 1/5. Its function is as follows. Acts in the modification of cell walls via demethylesterification of cell wall pectin. The chain is Putative pectinesterase/pectinesterase inhibitor 22 (PME22) from Arabidopsis thaliana (Mouse-ear cress).